Reading from the N-terminus, the 397-residue chain is CCA-adding enzyme (397 aa).

2 residues coordinate ATP: Gly-26 and Arg-29. Positions 26 and 29 each coordinate CTP. Residues Asp-39 and Asp-41 each coordinate Mg(2+). Residues Arg-110, Asp-153, Arg-156, Arg-159, and Arg-162 each coordinate ATP. CTP contacts are provided by Arg-110, Asp-153, Arg-156, Arg-159, and Arg-162.

This sequence belongs to the tRNA nucleotidyltransferase/poly(A) polymerase family. Bacterial CCA-adding enzyme type 3 subfamily. Homodimer. Mg(2+) is required as a cofactor.

It catalyses the reaction a tRNA precursor + 2 CTP + ATP = a tRNA with a 3' CCA end + 3 diphosphate. It carries out the reaction a tRNA with a 3' CCA end + 2 CTP + ATP = a tRNA with a 3' CCACCA end + 3 diphosphate. Functionally, catalyzes the addition and repair of the essential 3'-terminal CCA sequence in tRNAs without using a nucleic acid template. Adds these three nucleotides in the order of C, C, and A to the tRNA nucleotide-73, using CTP and ATP as substrates and producing inorganic pyrophosphate. tRNA 3'-terminal CCA addition is required both for tRNA processing and repair. Also involved in tRNA surveillance by mediating tandem CCA addition to generate a CCACCA at the 3' terminus of unstable tRNAs. While stable tRNAs receive only 3'-terminal CCA, unstable tRNAs are marked with CCACCA and rapidly degraded. In Bacillus cereus (strain B4264), this protein is CCA-adding enzyme.